We begin with the raw amino-acid sequence, 349 residues long: UDP-3-O-acylglucosamine N-acyltransferase (349 aa).

H242 serves as the catalytic Proton acceptor.

This sequence belongs to the transferase hexapeptide repeat family. LpxD subfamily. As to quaternary structure, homotrimer.

The enzyme catalyses a UDP-3-O-[(3R)-3-hydroxyacyl]-alpha-D-glucosamine + a (3R)-hydroxyacyl-[ACP] = a UDP-2-N,3-O-bis[(3R)-3-hydroxyacyl]-alpha-D-glucosamine + holo-[ACP] + H(+). The protein operates within bacterial outer membrane biogenesis; LPS lipid A biosynthesis. Catalyzes the N-acylation of UDP-3-O-acylglucosamine using 3-hydroxyacyl-ACP as the acyl donor. Is involved in the biosynthesis of lipid A, a phosphorylated glycolipid that anchors the lipopolysaccharide to the outer membrane of the cell. In Cytophaga hutchinsonii (strain ATCC 33406 / DSM 1761 / CIP 103989 / NBRC 15051 / NCIMB 9469 / D465), this protein is UDP-3-O-acylglucosamine N-acyltransferase.